We begin with the raw amino-acid sequence, 227 residues long: Pyridoxine-5'-phosphate oxidase (227 aa).

Position 20-23 (20-23 (RKDY)) interacts with pyridoxal 5'-phosphate. Residue 75–78 (RVVL) coordinates FMN. Lys-80 is a pyridoxal 5'-phosphate binding site. FMN-binding positions include 90 to 91 (YT), 96 to 97 (RK), and Gln-117. Positions 135, 139, and 143 each coordinate pyridoxal 5'-phosphate. Residues 152–153 (FQ) and Trp-197 each bind FMN. Residue 203-205 (RIH) coordinates pyridoxal 5'-phosphate. FMN is bound at residue Arg-207.

It belongs to the pyridoxamine 5'-phosphate oxidase family. Homodimer. FMN is required as a cofactor.

It catalyses the reaction pyridoxamine 5'-phosphate + O2 + H2O = pyridoxal 5'-phosphate + H2O2 + NH4(+). It carries out the reaction pyridoxine 5'-phosphate + O2 = pyridoxal 5'-phosphate + H2O2. The protein operates within cofactor metabolism; pyridoxal 5'-phosphate salvage; pyridoxal 5'-phosphate from pyridoxamine 5'-phosphate: step 1/1. It functions in the pathway cofactor metabolism; pyridoxal 5'-phosphate salvage; pyridoxal 5'-phosphate from pyridoxine 5'-phosphate: step 1/1. Its function is as follows. Catalyzes the oxidation of either pyridoxine 5'-phosphate (PNP) or pyridoxamine 5'-phosphate (PMP) into pyridoxal 5'-phosphate (PLP). This chain is Pyridoxine-5'-phosphate oxidase (pnpo), found in Dictyostelium discoideum (Social amoeba).